A 302-amino-acid polypeptide reads, in one-letter code: Bifunctional protein FolD (302 aa).

Residues Gly168–Ser170, Thr197, and Val238 contribute to the NADP(+) site.

This sequence belongs to the tetrahydrofolate dehydrogenase/cyclohydrolase family. As to quaternary structure, homodimer.

The enzyme catalyses (6R)-5,10-methylene-5,6,7,8-tetrahydrofolate + NADP(+) = (6R)-5,10-methenyltetrahydrofolate + NADPH. It carries out the reaction (6R)-5,10-methenyltetrahydrofolate + H2O = (6R)-10-formyltetrahydrofolate + H(+). It participates in one-carbon metabolism; tetrahydrofolate interconversion. In terms of biological role, catalyzes the oxidation of 5,10-methylenetetrahydrofolate to 5,10-methenyltetrahydrofolate and then the hydrolysis of 5,10-methenyltetrahydrofolate to 10-formyltetrahydrofolate. This Desulfatibacillum aliphaticivorans protein is Bifunctional protein FolD.